The chain runs to 277 residues: L-aspartate oxidase (277 aa).

Arg23 serves as the catalytic Proton donor/acceptor. FAD contacts are provided by residues Glu106 and 122-123 (SL). Disordered stretches follow at residues 142 to 161 (LRRGWPPPAPPDLSPRPPPA) and 234 to 277 (DYPA…ETRS). Over residues 146–161 (WPPPAPPDLSPRPPPA) the composition is skewed to pro residues.

This sequence belongs to the FAD-dependent oxidoreductase 2 family. NadB subfamily. The cofactor is FAD.

It localises to the cytoplasm. The enzyme catalyses L-aspartate + O2 = iminosuccinate + H2O2. It functions in the pathway cofactor biosynthesis; NAD(+) biosynthesis; iminoaspartate from L-aspartate (oxidase route): step 1/1. Catalyzes the oxidation of L-aspartate to iminoaspartate, the first step in the de novo biosynthesis of NAD(+). This is L-aspartate oxidase (nadB) from Rhodospirillum rubrum.